We begin with the raw amino-acid sequence, 549 residues long: ATP synthase subunit alpha (549 aa).

172–179 (GDRKTGKT) serves as a coordination point for ATP.

The protein belongs to the ATPase alpha/beta chains family. As to quaternary structure, F-type ATPases have 2 components, CF(1) - the catalytic core - and CF(0) - the membrane proton channel. CF(1) has five subunits: alpha(3), beta(3), gamma(1), delta(1), epsilon(1). CF(0) has three main subunits: a(1), b(2) and c(9-12). The alpha and beta chains form an alternating ring which encloses part of the gamma chain. CF(1) is attached to CF(0) by a central stalk formed by the gamma and epsilon chains, while a peripheral stalk is formed by the delta and b chains.

The protein localises to the cell membrane. The enzyme catalyses ATP + H2O + 4 H(+)(in) = ADP + phosphate + 5 H(+)(out). Functionally, produces ATP from ADP in the presence of a proton gradient across the membrane. The alpha chain is a regulatory subunit. The chain is ATP synthase subunit alpha from Mycobacterium tuberculosis (strain CDC 1551 / Oshkosh).